An 897-amino-acid chain; its full sequence is DNA polymerase I (897 aa).

In terms of domain architecture, 5'-3' exonuclease spans 1 to 317 (MEQPVIKEGT…ILDNTPALDN (317 aa)). Residues 318 to 494 (APKKSRMIVL…RLCEYFEKGG (177 aa)) enclose the 3'-5' exonuclease domain. Residues 498–896 (DLLTLARDIE…FIAKRWNELK (399 aa)) are polymerase.

The protein belongs to the DNA polymerase type-A family. As to quaternary structure, single-chain monomer with multiple functions.

It catalyses the reaction DNA(n) + a 2'-deoxyribonucleoside 5'-triphosphate = DNA(n+1) + diphosphate. Functionally, in addition to polymerase activity, this DNA polymerase exhibits 3'-5' and 5'-3' exonuclease activity. The chain is DNA polymerase I (polA) from Helicobacter pylori (strain J99 / ATCC 700824) (Campylobacter pylori J99).